A 553-amino-acid chain; its full sequence is Arginine--tRNA ligase (553 aa).

The short motif at 130–140 is the 'HIGH' region element; the sequence is ANPTGPVHLGG.

It belongs to the class-I aminoacyl-tRNA synthetase family. As to quaternary structure, monomer.

It localises to the cytoplasm. It catalyses the reaction tRNA(Arg) + L-arginine + ATP = L-arginyl-tRNA(Arg) + AMP + diphosphate. The sequence is that of Arginine--tRNA ligase from Saccharopolyspora erythraea (strain ATCC 11635 / DSM 40517 / JCM 4748 / NBRC 13426 / NCIMB 8594 / NRRL 2338).